Here is a 380-residue protein sequence, read N- to C-terminus: MAPNIRKSHPLLKMINNSLIDLPAPSNISAWWNFGSLLAVCLMTQILTGLLLAMHYTADTSLAFSSVAHTCRNVQYGWLIRNLHANGASFFFICIFLHIGRGLYYGSYLYKETWNTGVILLLTLMATAFVGYVLPWGQMSFWGATVITNLFSAIPYIGHTLVEWAWGGFSVDNPTLTRFFALHFLLPFAIAGITIIHLTFLHESGSNNPLGISSDSDKIPFHPYYSFKDILGLTLMLTPFLTLALFSPNLLGDPENFTPANPLVTPPHIKPEWYFLFAYAILRSIPNKLGGVLALAASVLILFLIPFLHKSKQRTMTFRPLSQTLFWLLVANLLILTWIGSQPVEHPFIIIGQMASLSYFTILLILFPTIGTLENKMLNY.

The next 4 membrane-spanning stretches (helical) occupy residues 34 to 54 (FGSLLAVCLMTQILTGLLLAM), 78 to 99 (WLIRNLHANGASFFFICIFLHI), 114 to 134 (WNTGVILLLTLMATAFVGYVL), and 179 to 199 (FFALHFLLPFAIAGITIIHLT). Heme b contacts are provided by His-84 and His-98. 2 residues coordinate heme b: His-183 and His-197. Residue His-202 participates in a ubiquinone binding. 4 helical membrane-spanning segments follow: residues 227–247 (FKDILGLTLMLTPFLTLALFS), 289–309 (LGGVLALAASVLILFLIPFLH), 321–341 (LSQTLFWLLVANLLILTWIGS), and 348–368 (FIIIGQMASLSYFTILLILFP).

The protein belongs to the cytochrome b family. In terms of assembly, the cytochrome bc1 complex contains 11 subunits: 3 respiratory subunits (MT-CYB, CYC1 and UQCRFS1), 2 core proteins (UQCRC1 and UQCRC2) and 6 low-molecular weight proteins (UQCRH/QCR6, UQCRB/QCR7, UQCRQ/QCR8, UQCR10/QCR9, UQCR11/QCR10 and a cleavage product of UQCRFS1). This cytochrome bc1 complex then forms a dimer. Heme b serves as cofactor.

It localises to the mitochondrion inner membrane. Its function is as follows. Component of the ubiquinol-cytochrome c reductase complex (complex III or cytochrome b-c1 complex) that is part of the mitochondrial respiratory chain. The b-c1 complex mediates electron transfer from ubiquinol to cytochrome c. Contributes to the generation of a proton gradient across the mitochondrial membrane that is then used for ATP synthesis. This chain is Cytochrome b (MT-CYB), found in Gallus gallus (Chicken).